The following is a 367-amino-acid chain: MFGQQQQQQPPPPAASAYLNHNSRWTPPNESAQPRRSSNAMDINAITDRDPAEGHPRSNHTSSSIGSPIDKSPETYPGHEENGRIYHGFRRGIYFLPCDDLEQDRLDIFHKVITVARVSDALIYSPHPRNGRFLDLGCGTGIWAIDVAQKYPDAFVVGVDLSPIQPLNSPRNCDFYAPFDFESPWALGEDSWDLIHMQLGCGSVVSWPSLYRRIFAHLRPGAWFEQVEIDFEPRCDDRSLEGLALHHWYQCLKQATEEAMRPLAHNPRETIRHLQEAGFTEIDHQIVGLPLNPWHQDEHEKTVARWYNLAICESIETFSLAPFTRFFGWPVDRIKRLVADVRSEAFNKDIHAYNILHIYQARKPISN.

The segment at 1 to 82 (MFGQQQQQQP…PETYPGHEEN (82 aa)) is disordered. Positions 19–41 (LNHNSRWTPPNESAQPRRSSNAM) are enriched in polar residues. Basic and acidic residues-rich tracts occupy residues 47 to 56 (TDRDPAEGHP) and 71 to 82 (KSPETYPGHEEN).

It belongs to the methyltransferase superfamily. LaeA methyltransferase family. In terms of assembly, component of the heterotrimeric velvet complex composed of laeA, veA and velB; VeA acting as a bridging protein between laeA and velB.

It localises to the nucleus. It carries out the reaction L-methionyl-[protein] + S-adenosyl-L-methionine = S-methyl-L-methionyl-[protein] + S-adenosyl-L-homocysteine. Functionally, methyltransferase that performs automethylation. No other methyl-accepting substrate has been identified yet. Component of the velvet transcription factor complex that acts as a global regulator for secondary metabolite gene expression. Controls the expression of the monacolin K gene clusters. Also regulates pigmentation. In Monascus pilosus (Red mold), this protein is Secondary metabolism regulator laeA.